Reading from the N-terminus, the 102-residue chain is Co-chaperonin GroES (102 aa).

It belongs to the GroES chaperonin family. As to quaternary structure, heptamer of 7 subunits arranged in a ring. Interacts with the chaperonin GroEL.

It localises to the cytoplasm. Together with the chaperonin GroEL, plays an essential role in assisting protein folding. The GroEL-GroES system forms a nano-cage that allows encapsulation of the non-native substrate proteins and provides a physical environment optimized to promote and accelerate protein folding. GroES binds to the apical surface of the GroEL ring, thereby capping the opening of the GroEL channel. The protein is Co-chaperonin GroES of Streptomyces albus G.